A 300-amino-acid chain; its full sequence is uncharacterized protein (300 aa).

The a divalent metal cation site is built by E146, E148, and D177.

This sequence belongs to the FAH family.

This is an uncharacterized protein from Staphylococcus aureus (strain MW2).